The following is a 166-amino-acid chain: Large ribosomal subunit protein bL17 (166 aa).

The interval 122–166 (PESAPVKAKQDRSKRVRGSKKTQEGSEKAEVSASAGEAAAVTEEK) is disordered. Residues 142 to 151 (KTQEGSEKAE) show a composition bias toward basic and acidic residues. A compositionally biased stretch (low complexity) spans 152–166 (VSASAGEAAAVTEEK).

This sequence belongs to the bacterial ribosomal protein bL17 family. In terms of assembly, part of the 50S ribosomal subunit. Contacts protein L32.

This is Large ribosomal subunit protein bL17 from Chlorobium phaeobacteroides (strain BS1).